The primary structure comprises 201 residues: MARYTGPVTRKSRRLGTDLVGGDQSFEKRPYPPGQHGRARIKDSEYRQQLQEKQKARFTYGVMEKQFRRYYEEAVRHSGKTGEELLKILESRLDNVVYRAGLARTRRMARQLVSHGHFSVNGVHVNVPSYRVSQYDIIDVRDNSLNTVPFQIARETAGDRPIPSWLQVVGGRQRILIHQLPERAQIEVPLTEQLIVEYYSK.

Residues 1–42 (MARYTGPVTRKSRRLGTDLVGGDQSFEKRPYPPGQHGRARIK) are disordered. The region spanning 91 to 157 (SRLDNVVYRA…VPFQIARETA (67 aa)) is the S4 RNA-binding domain.

The protein belongs to the universal ribosomal protein uS4 family. Part of the 30S ribosomal subunit. Contacts protein S5. The interaction surface between S4 and S5 is involved in control of translational fidelity.

Functionally, one of the primary rRNA binding proteins, it binds directly to 16S rRNA where it nucleates assembly of the body of the 30S subunit. Its function is as follows. With S5 and S12 plays an important role in translational accuracy. The sequence is that of Small ribosomal subunit protein uS4 from Mycobacterium ulcerans (strain Agy99).